The chain runs to 372 residues: Alpha-1-antitrypsin homolog (372 aa).

Residues 1-19 form the signal peptide; it reads MPATCLLHTMLTLPSPSTR. N-linked (GlcNAc...) asparagine glycosylation is found at asparagine 214 and asparagine 226. The RCL stretch occupies residues 328–347; that stretch reads AATTIEIMPMSLPDTVILNR.

This sequence belongs to the serpin family.

It is found in the secreted. The polypeptide is Alpha-1-antitrypsin homolog (Cyprinus carpio (Common carp)).